Reading from the N-terminus, the 190-residue chain is Potassium-transporting ATPase KdpC subunit (190 aa).

The chain crosses the membrane as a helical span at residues 10-30; sequence TFIFLLLITGGVYPLLTTVLG.

This sequence belongs to the KdpC family. As to quaternary structure, the system is composed of three essential subunits: KdpA, KdpB and KdpC.

Its subcellular location is the cell inner membrane. Functionally, part of the high-affinity ATP-driven potassium transport (or Kdp) system, which catalyzes the hydrolysis of ATP coupled with the electrogenic transport of potassium into the cytoplasm. This subunit acts as a catalytic chaperone that increases the ATP-binding affinity of the ATP-hydrolyzing subunit KdpB by the formation of a transient KdpB/KdpC/ATP ternary complex. The protein is Potassium-transporting ATPase KdpC subunit of Escherichia coli O139:H28 (strain E24377A / ETEC).